A 58-amino-acid chain; its full sequence is MTQVVVGQNENIESALRRFKRQVSKAGIFADIKRRRHFETPIEKRKRKAVARRKKRFR.

This sequence belongs to the bacterial ribosomal protein bS21 family.

The protein is Small ribosomal subunit protein bS21 of Picosynechococcus sp. (strain ATCC 27264 / PCC 7002 / PR-6) (Agmenellum quadruplicatum).